A 217-amino-acid polypeptide reads, in one-letter code: MNDTTPVIIRQLGRQAYFPIWQAMQDFTDSRDSSSQDEIWLVEHDPVFTQGQAGKEEHLLAPGDIPVVKVDRGGQVTYHGPGQQMMYVLLNLKRHGLGVRTLVSALESCIVDTLKEYKVDAYPKADAPGVYVDNKKVCSIGLRIRRGCSFHGLALNVNMDLAPFQRINPCGYAGLEMVDCTQLGGPDSLAVAGPAIAEKLCSLLGIASVENKEGFDE.

The BPL/LPL catalytic domain occupies 33-208; sequence SSSQDEIWLV…KLCSLLGIAS (176 aa). Substrate is bound by residues 72–79, 139–141, and 152–154; these read RGGQVTYH, SIG, and GLA. Cys170 serves as the catalytic Acyl-thioester intermediate.

The protein belongs to the LipB family.

The protein localises to the cytoplasm. The enzyme catalyses octanoyl-[ACP] + L-lysyl-[protein] = N(6)-octanoyl-L-lysyl-[protein] + holo-[ACP] + H(+). It participates in protein modification; protein lipoylation via endogenous pathway; protein N(6)-(lipoyl)lysine from octanoyl-[acyl-carrier-protein]: step 1/2. Functionally, catalyzes the transfer of endogenously produced octanoic acid from octanoyl-acyl-carrier-protein onto the lipoyl domains of lipoate-dependent enzymes. Lipoyl-ACP can also act as a substrate although octanoyl-ACP is likely to be the physiological substrate. The sequence is that of Octanoyltransferase from Pseudoalteromonas atlantica (strain T6c / ATCC BAA-1087).